Reading from the N-terminus, the 240-residue chain is 7-cyano-7-deazaguanine synthase (240 aa).

An ATP-binding site is contributed by 18-28 (FSGGQDSTTCL). Residues cysteine 197, cysteine 206, cysteine 209, and cysteine 212 each contribute to the Zn(2+) site.

Belongs to the QueC family. It depends on Zn(2+) as a cofactor.

It catalyses the reaction 7-carboxy-7-deazaguanine + NH4(+) + ATP = 7-cyano-7-deazaguanine + ADP + phosphate + H2O + H(+). It participates in purine metabolism; 7-cyano-7-deazaguanine biosynthesis. In terms of biological role, catalyzes the ATP-dependent conversion of 7-carboxy-7-deazaguanine (CDG) to 7-cyano-7-deazaguanine (preQ(0)). This is 7-cyano-7-deazaguanine synthase from Shewanella putrefaciens (strain CN-32 / ATCC BAA-453).